The primary structure comprises 37 residues: Large ribosomal subunit protein bL36 (37 aa).

The protein belongs to the bacterial ribosomal protein bL36 family.

The protein is Large ribosomal subunit protein bL36 of Tropheryma whipplei (strain Twist) (Whipple's bacillus).